Consider the following 330-residue polypeptide: 4-hydroxythreonine-4-phosphate dehydrogenase (330 aa).

Substrate is bound by residues histidine 136 and threonine 137. A divalent metal cation-binding residues include histidine 166, histidine 211, and histidine 266. 3 residues coordinate substrate: lysine 274, asparagine 283, and arginine 292.

This sequence belongs to the PdxA family. In terms of assembly, homodimer. It depends on Zn(2+) as a cofactor. Mg(2+) is required as a cofactor. The cofactor is Co(2+).

Its subcellular location is the cytoplasm. The enzyme catalyses 4-(phosphooxy)-L-threonine + NAD(+) = 3-amino-2-oxopropyl phosphate + CO2 + NADH. It functions in the pathway cofactor biosynthesis; pyridoxine 5'-phosphate biosynthesis; pyridoxine 5'-phosphate from D-erythrose 4-phosphate: step 4/5. Catalyzes the NAD(P)-dependent oxidation of 4-(phosphooxy)-L-threonine (HTP) into 2-amino-3-oxo-4-(phosphooxy)butyric acid which spontaneously decarboxylates to form 3-amino-2-oxopropyl phosphate (AHAP). The sequence is that of 4-hydroxythreonine-4-phosphate dehydrogenase from Erwinia tasmaniensis (strain DSM 17950 / CFBP 7177 / CIP 109463 / NCPPB 4357 / Et1/99).